The primary structure comprises 248 residues: tRNA (guanine-N(7)-)-methyltransferase (248 aa).

Residues G70, 93–94, 129–130, and L149 each bind S-adenosyl-L-methionine; these read EI and NA. D152 is a catalytic residue. 227–229 contacts S-adenosyl-L-methionine; it reads SEE.

It belongs to the class I-like SAM-binding methyltransferase superfamily. TrmB family.

The protein localises to the nucleus. It catalyses the reaction guanosine(46) in tRNA + S-adenosyl-L-methionine = N(7)-methylguanosine(46) in tRNA + S-adenosyl-L-homocysteine. The protein operates within tRNA modification; N(7)-methylguanine-tRNA biosynthesis. In terms of biological role, catalyzes the formation of N(7)-methylguanine at position 46 (m7G46) in tRNA. This chain is tRNA (guanine-N(7)-)-methyltransferase, found in Drosophila mojavensis (Fruit fly).